A 687-amino-acid chain; its full sequence is E3 ubiquitin-protein ligase RNF19B (687 aa).

The interval methionine 1–cysteine 294 is required for ubiquitin ligase activity and for protection against staurosporin-induced cell death. The tract at residues arginine 53–glycine 88 is disordered. Positions proline 60 to serine 85 are enriched in pro residues. The tract at residues serine 91–glycine 313 is TRIAD supradomain. Residues cysteine 95, cysteine 98, cysteine 118, cysteine 121, cysteine 182, cysteine 187, cysteine 204, cysteine 209, cysteine 214, cysteine 217, histidine 222, cysteine 227, cysteine 263, and cysteine 266 each contribute to the Zn(2+) site. An RING-type 1 zinc finger spans residues cysteine 95–glutamate 144. Residues threonine 161–cysteine 227 form an IBR-type zinc finger. The segment at cysteine 263 to cysteine 294 adopts an RING-type 2; atypical zinc-finger fold. The active site involves cysteine 278. The Zn(2+) site is built by cysteine 283, cysteine 286, cysteine 291, cysteine 294, histidine 302, and cysteine 309. A run of 2 helical transmembrane segments spans residues leucine 330–isoleucine 350 and valine 391–valine 411. The interval serine 618–arginine 662 is disordered. The span at glutamine 629–tyrosine 641 shows a compositional bias: acidic residues.

Belongs to the RBR family. RNF19 subfamily. In terms of assembly, interacts with UBE2L3, UBE2L6 and UCKL1.

It localises to the cytoplasmic granule membrane. The protein localises to the endoplasmic reticulum membrane. It carries out the reaction [E2 ubiquitin-conjugating enzyme]-S-ubiquitinyl-L-cysteine + [acceptor protein]-L-lysine = [E2 ubiquitin-conjugating enzyme]-L-cysteine + [acceptor protein]-N(6)-ubiquitinyl-L-lysine.. The protein operates within protein modification; protein ubiquitination. Functionally, E3 ubiquitin-protein ligase which accepts ubiquitin from E2 ubiquitin-conjugating enzymes UBE2L3 and UBE2L6 in the form of a thioester and then directly transfers the ubiquitin to targeted substrates, such as UCKL1. Involved in the cytolytic activity of natural killer cells and cytotoxic T-cells. Protects against staurosporin-induced cell death. The chain is E3 ubiquitin-protein ligase RNF19B (rnf19b) from Xenopus laevis (African clawed frog).